The chain runs to 329 residues: Putative glucose-6-phosphate 1-epimerase (329 aa).

Positions Met1–Pro13 are enriched in low complexity. Residues Met1 to Pro20 form a disordered region. Residues Arg82, Gln100, and Arg105 each coordinate substrate. His183 is an active-site residue. A substrate-binding site is contributed by Asp228. Glu287 is an active-site residue.

This sequence belongs to the glucose-6-phosphate 1-epimerase family.

It carries out the reaction alpha-D-glucose 6-phosphate = beta-D-glucose 6-phosphate. This Cenchrus ciliaris (Buffelgrass) protein is Putative glucose-6-phosphate 1-epimerase.